The following is a 427-amino-acid chain: UDP-N-acetylglucosamine 1-carboxyvinyltransferase 1 (427 aa).

Phosphoenolpyruvate is bound at residue 23 to 24 (KN). Residue arginine 96 coordinates UDP-N-acetyl-alpha-D-glucosamine. Cysteine 120 functions as the Proton donor in the catalytic mechanism. Residue cysteine 120 is modified to 2-(S-cysteinyl)pyruvic acid O-phosphothioketal. Residues 125–129 (RPIDL), aspartate 309, and valine 331 each bind UDP-N-acetyl-alpha-D-glucosamine.

This sequence belongs to the EPSP synthase family. MurA subfamily.

It localises to the cytoplasm. The catalysed reaction is phosphoenolpyruvate + UDP-N-acetyl-alpha-D-glucosamine = UDP-N-acetyl-3-O-(1-carboxyvinyl)-alpha-D-glucosamine + phosphate. The protein operates within cell wall biogenesis; peptidoglycan biosynthesis. Functionally, cell wall formation. Adds enolpyruvyl to UDP-N-acetylglucosamine. The polypeptide is UDP-N-acetylglucosamine 1-carboxyvinyltransferase 1 (Streptococcus pneumoniae serotype 4 (strain ATCC BAA-334 / TIGR4)).